The following is a 412-amino-acid chain: Homoserine dehydrogenase (412 aa).

Residues 9 to 16 (LGIGTVGG) and Lys105 contribute to the NADP(+) site. Glu190 is a binding site for substrate. The active-site Proton donor is Lys205. Residues 330 to 407 (YLRLRAVDKP…ISGKVTRLRM (78 aa)) form the ACT domain.

The protein belongs to the homoserine dehydrogenase family.

It catalyses the reaction L-homoserine + NADP(+) = L-aspartate 4-semialdehyde + NADPH + H(+). The catalysed reaction is L-homoserine + NAD(+) = L-aspartate 4-semialdehyde + NADH + H(+). It functions in the pathway amino-acid biosynthesis; L-methionine biosynthesis via de novo pathway; L-homoserine from L-aspartate: step 3/3. The protein operates within amino-acid biosynthesis; L-threonine biosynthesis; L-threonine from L-aspartate: step 3/5. The protein is Homoserine dehydrogenase (hom) of Methylobacillus glycogenes.